The sequence spans 349 residues: NADH-quinone oxidoreductase subunit H (349 aa).

Transmembrane regions (helical) follow at residues 14-34, 85-105, 120-140, 164-184, 196-216, 243-263, 285-305, and 324-344; these read LLVWTLLKIIAIVLPMLGCVA, GLFLLAPVLSIGPALAAWAVI, LLYILALTSMGVYGVIIAGWA, MGFALVGVLMVSGSLNLVDIV, ILSWNWIPLFPLFIVYLISGV, GMAFAIFFLAEYANMILVAAL, AGGFFWLAVKMALVLFCFLWF, and VFIPVTLVWILVVGAWMFSPL.

It belongs to the complex I subunit 1 family. In terms of assembly, NDH-1 is composed of 14 different subunits. Subunits NuoA, H, J, K, L, M, N constitute the membrane sector of the complex.

Its subcellular location is the cell inner membrane. It catalyses the reaction a quinone + NADH + 5 H(+)(in) = a quinol + NAD(+) + 4 H(+)(out). In terms of biological role, NDH-1 shuttles electrons from NADH, via FMN and iron-sulfur (Fe-S) centers, to quinones in the respiratory chain. The immediate electron acceptor for the enzyme in this species is believed to be ubiquinone. Couples the redox reaction to proton translocation (for every two electrons transferred, four hydrogen ions are translocated across the cytoplasmic membrane), and thus conserves the redox energy in a proton gradient. This subunit may bind ubiquinone. The polypeptide is NADH-quinone oxidoreductase subunit H (Chromobacterium violaceum (strain ATCC 12472 / DSM 30191 / JCM 1249 / CCUG 213 / NBRC 12614 / NCIMB 9131 / NCTC 9757 / MK)).